A 396-amino-acid polypeptide reads, in one-letter code: Elongation factor Tu 2 (396 aa).

In terms of domain architecture, tr-type G spans 10–206 (KPHCNIGTIG…TVDAYIPQPD (197 aa)). The G1 stretch occupies residues 19–26 (GHVDHGKT). Residue 19–26 (GHVDHGKT) coordinates GTP. Residue T26 participates in Mg(2+) binding. Residues 60 to 64 (GITIN) are G2. The interval 81-84 (DCPG) is G3. GTP is bound by residues 81 to 85 (DCPGH) and 136 to 139 (NKVD). Positions 136–139 (NKVD) are G4. Residues 174–176 (SAK) form a G5 region.

This sequence belongs to the TRAFAC class translation factor GTPase superfamily. Classic translation factor GTPase family. EF-Tu/EF-1A subfamily. As to quaternary structure, monomer.

The protein localises to the cytoplasm. The catalysed reaction is GTP + H2O = GDP + phosphate + H(+). Functionally, GTP hydrolase that promotes the GTP-dependent binding of aminoacyl-tRNA to the A-site of ribosomes during protein biosynthesis. In Caulobacter sp. (strain K31), this protein is Elongation factor Tu 2.